The chain runs to 3011 residues: Genome polyprotein (3011 aa).

N-acetylserine; by host is present on Ser-2. The interaction with STAT1 stretch occupies residues 2 to 23 (STNPKPQKKNKRNTNRRPQDVK). An interaction with EIF2AK2/PKR region spans residues 2–58 (STNPKPQKKNKRNTNRRPQDVKFPGGGQIVGGVYLLPRRGPRLGVRATRKTSERSQP). The tract at residues 2–59 (STNPKPQKKNKRNTNRRPQDVKFPGGGQIVGGVYLLPRRGPRLGVRATRKTSERSQPR) is interaction with DDX3X. The disordered stretch occupies residues 2–75 (STNPKPQKKN…PKARRPEGRT (74 aa)). Topologically, residues 2–168 (STNPKPQKKN…EDGVNYATGN (167 aa)) are cytoplasmic. 2 short sequence motifs (nuclear localization signal) span residues 5-13 (PKPQKKNKR) and 38-43 (PRRGPR). The segment covering 7 to 16 (PQKKNKRNTN) has biased composition (basic residues). Residues 32–47 (GGVYLLPRRGPRLGVR) are compositionally biased toward low complexity. Ser-53 is subject to Phosphoserine; by host. 2 short sequence motifs (nuclear localization signal) span residues 58-64 (PRGRRQP) and 66-71 (PKARRP). Residues 58-68 (PRGRRQPIPKA) are compositionally biased toward basic residues. Ser-99 is subject to Phosphoserine; by host. Positions 112–152 (PRRRSRNLGKVIDTLTCGFADLMGYIPLVGAPLGGAARALA) are important for endoplasmic reticulum and mitochondrial localization. Residue Ser-116 is modified to Phosphoserine; by host PKA. The tract at residues 122–173 (VIDTLTCGFADLMGYIPLVGAPLGGAARALAHGVRVLEDGVNYATGNLPGCS) is interaction with APOA2. An important for lipid droplets localization region spans residues 164 to 167 (YATG). A helical membrane pass occupies residues 169 to 189 (LPGCSFSIFLLALLSCLTVPA). Residues 178–191 (LLALLSCLTVPASA) constitute a propeptide, ER anchor for the core protein, removed in mature form by host signal peptidase. The Lumenal portion of the chain corresponds to 190-358 (SAYQVRNSTG…AGAHWGVLAG (169 aa)). Residues Asn-196, Asn-209, and Asn-234 are each glycosylated (N-linked (GlcNAc...) asparagine; by host). The interval 265-296 (LVGSATLCSALYVGDLCGSVFLVGQLFTFSPR) is important for fusion. Asn-305 carries N-linked (GlcNAc...) asparagine; by host glycosylation. Residues 359–379 (IAYFSMVGNWAKVLVVLLLFA) form a helical membrane-spanning segment. Over 380–725 (GVDAETHVTG…WEYVVLLFLL (346 aa)) the chain is Lumenal. The tract at residues 385–411 (THVTGGSAGHTVSGFVSLLAPGAKQNV) is HVR1. Asn-417, Asn-423, Asn-430, and Asn-448 each carry an N-linked (GlcNAc...) (high mannose) asparagine; by host glycan. Cystine bridges form between Cys-429–Cys-552, Cys-452–Cys-459, Cys-486–Cys-494, and Cys-503–Cys-508. Residues 474-480 (YANGSGP) are HVR2. N-linked (GlcNAc...) asparagine; by host glycosylation is present at Asn-476. Residues 481–493 (DQRPYCWHYPPKP) form a CD81-binding 1 region. Residue Asn-532 is glycosylated (N-linked (GlcNAc...) (high mannose) asparagine; by host). Residues 543 to 551 (RPPLGNWFG) are CD81-binding 2. An N-linked (GlcNAc...) (high mannose) asparagine; by host glycan is attached at Asn-556. Cys-564 and Cys-569 form a disulfide bridge. N-linked (GlcNAc...) (high mannose) asparagine; by host glycosylation is present at Asn-576. Cystine bridges form between Cys-581–Cys-585, Cys-597–Cys-620, and Cys-607–Cys-644. Asn-623 and Asn-645 each carry an N-linked (GlcNAc...) (high mannose) asparagine; by host glycan. The cysteines at positions 652 and 677 are disulfide-linked. The interval 660–671 (SELSPLLLTTTQ) is EIF2AK2/eIF2-alpha phosphorylation homology domain (PePHD). The helical transmembrane segment at 726–746 (LADARVCSCLWMMLLISQAEA) threads the bilayer. The Lumenal segment spans residues 747-757 (ALENLVILNAA). The helical transmembrane segment at 758 to 778 (SLAGTHGLVSFLVFFCFAWYL) threads the bilayer. Over 779–781 (KGK) the chain is Cytoplasmic. A helical membrane pass occupies residues 782 to 803 (WVPGAVYTFYGMWPLLLLLLAL). At 804 to 813 (PQRAYALDTE) the chain is on the lumenal side. The chain crosses the membrane as a helical span at residues 814 to 834 (VAASCGGVVLVGLMALTLSPY). Over 835–838 (YKRY) the chain is Cytoplasmic. A helical transmembrane segment spans residues 839–859 (ISWCLWWLQYFLTRVEAQLHV). Over 860–881 (WIPPLNVRGGRDAVILLMCAVH) the chain is Lumenal. The chain crosses the membrane as a helical span at residues 882-902 (PTLVFDITKLLLAVFGPLWIL). The region spanning 899–1026 (LWILQASLLK…GMVSKGWRLL (128 aa)) is the Peptidase C18 domain. Over 903 to 1657 (QASLLKVPYF…CMSADLEVVT (755 aa)) the chain is Cytoplasmic. Positions 904–1206 (ASLLKVPYFV…PVENLETTMR (303 aa)) are protease NS2-3. Residue Cys-922 is the site of S-palmitoyl cysteine; by host attachment. Positions 929–949 (IGGHYVQMVIIKLGALTGTYV) are interaction with host SCPS1. Active-site for protease NS2 activity; shared with dimeric partner residues include His-952, Glu-972, and Cys-993. In terms of domain architecture, Peptidase S29 spans 1027-1208 (APITAYAQQT…ENLETTMRSP (182 aa)). Active-site charge relay system; for serine protease NS3 activity residues include His-1083 and Asp-1107. 2 residues coordinate Zn(2+): Cys-1123 and Cys-1125. Residue Ser-1165 is the Charge relay system; for serine protease NS3 activity of the active site. Residues Cys-1171 and His-1175 each contribute to the Zn(2+) site. Positions 1217–1369 (PVVPQSFQVA…PNIEEVALST (153 aa)) constitute a Helicase ATP-binding domain. 1230–1237 (APTGSGKS) provides a ligand contact to ATP. Mg(2+) is bound by residues Ser-1237 and Glu-1317. The short motif at 1316-1319 (DECH) is the DECH box element. The tract at residues 1486–1497 (QRRGRTGRGKPG) is RNA-binding. Residues 1658–1678 (STWVLVGGVLAALAAYCLSTG) form a helical membrane-spanning segment. Positions 1679 to 1690 (CVVIVGRVVLSG) are NS3-binding. Residues 1679–1805 (CVVIVGRVVL…AVTSPLTTSQ (127 aa)) are Cytoplasmic-facing. The helical transmembrane segment at 1806 to 1826 (TLLFNILGGWVAAQLAAPGAA) threads the bilayer. Residues 1827-1828 (TA) lie on the Lumenal side of the membrane. A helical membrane pass occupies residues 1829–1849 (FVGAGLAGAAIGSVGLGKVLI). The segment at 1833–1861 (GLAGAAIGSVGLGKVLIDILAGYGAGVAG) is glycine zipper. Position 1850 (Asp-1850) is a topological domain, cytoplasmic. A helical membrane pass occupies residues 1851-1871 (ILAGYGAGVAGALVAFKIMSG). Residues 1872–1881 (EVPSTEDLVN) are Lumenal-facing. A helical membrane pass occupies residues 1882–1902 (LLPAILSPGALVVGVVCAAIL). Residues 1903–1972 (RRHVGPGEGA…WISSECTTPC (70 aa)) are Cytoplasmic-facing. 2 S-palmitoyl cysteine; by host lipidation sites follow: Cys-1968 and Cys-1972. The stretch at 1973-2003 (SGSWLRDIWDWICEVLSDFKTWLKAKLMPQL) is an intramembrane region. The tract at residues 1978–1998 (RDIWDWICEVLSDFKTWLKAK) is membrane-binding. At 2004 to 2990 (PGIPFVSCQR…YHSVSHARPR (987 aa)) the chain is on the cytoplasmic side. The segment at 2005 to 2221 (GIPFVSCQRG…KATCTANHDS (217 aa)) is RNA-binding. Residues Cys-2011, Cys-2029, Cys-2031, and Cys-2052 each contribute to the Zn(2+) site. The segment at 2120–2208 (EFFTELDGVR…ASSSASQLSA (89 aa)) is FKBP8-binding. The transcriptional activation stretch occupies residues 2120 to 2332 (EFFTELDGVR…PVPPPRKKRT (213 aa)). An interaction with non-structural protein 4A region spans residues 2135 to 2139 (PPCKP). The tract at residues 2189 to 2441 (RLARGSPPSV…TPCAAEEQKL (253 aa)) is interaction with host SKP2. Phosphoserine; by host; in p56 is present on Ser-2194. Phosphoserine; by host; in p58 is present on residues Ser-2197, Ser-2201, Ser-2204, Ser-2207, and Ser-2210. An ISDR region spans residues 2206–2245 (LSAPSLKATCTANHDSPDAELIEANLLWRQEMGGNITRVE). The tract at residues 2210-2275 (SLKATCTANH…REISVPAEIL (66 aa)) is EIF2AK2/PKR-binding. The interval 2249–2306 (KVVILDSFDPLVAEEDEREISVPAEILRKSRRFAQALPVWARPDYNPPLVETWKKPDY) is NS4B-binding. Disordered regions lie at residues 2312–2334 (HGCP…RTVV) and 2351–2408 (SFGS…WSTV). The span at 2315–2326 (PLPPPKSPPVPP) shows a compositional bias: pro residues. Ser-2321 bears the Phosphoserine; by host mark. The short motif at 2322–2325 (PPVP) is the SH3-binding element. The short motif at 2326-2334 (PPRKKRTVV) is the Nuclear localization signal element. The interval 2332–2441 (TVVLTESTLS…TPCAAEEQKL (110 aa)) is interaction with host IFI27. The span at 2351-2369 (SFGSSSTSGITGDNTTTSS) shows a compositional bias: low complexity. A V3 region spans residues 2354–2377 (SSSTSGITGDNTTTSSEPAPSGCP). A phosphoserine; by host mark is found at Ser-2449 and Ser-2462. Positions 2634–2752 (PMGFSYDTRC…ICESAGVQED (119 aa)) constitute a RdRp catalytic domain. 3 residues coordinate Mg(2+): Asp-2640, Asp-2738, and Asp-2739. Residues 2991 to 3011 (WIWFCLLLLAAGVGIYLLPNR) form a helical membrane-spanning segment.

The protein belongs to the hepacivirus polyprotein family. In terms of assembly, homooligomer. Interacts with E1 (via C-terminus). Interacts with the non-structural protein 5A. Interacts (via N-terminus) with host STAT1 (via SH2 domain); this interaction results in decreased STAT1 phosphorylation and ubiquitin-mediated proteasome-dependent STAT1 degradation, leading to decreased IFN-stimulated gene transcription. Interacts with host STAT3; this interaction constitutively activates STAT3. Interacts with host LTBR receptor. Interacts with host TNFRSF1A receptor and possibly induces apoptosis. Interacts with host HNRPK. Interacts with host YWHAE. Interacts with host UBE3A/E6AP. Interacts with host DDX3X. Interacts with host APOA2. Interacts with host RXRA protein. Interacts with host SP110 isoform 3/Sp110b; this interaction sequesters the transcriptional corepressor SP110 away from the nucleus. Interacts with host CREB3 nuclear transcription protein; this interaction triggers cell transformation. Interacts with host ACY3. Interacts with host C1QR1. Interacts with host RBM24; this interaction, which enhances the interaction of the mature core protein with 5'-UTR, may inhibit viral translation and favor replication. Interacts with host EIF2AK2/PKR; this interaction induces the autophosphorylation of EIF2AK2. Part of the viral assembly initiation complex composed of NS2, E1, E2, NS3, NS4A, NS5A and the mature core protein. Forms a heterodimer with envelope glycoprotein E2. Interacts with mature core protein. Interacts with protease NS2. The heterodimer E1/E2 interacts with host CLDN1; this interaction plays a role in viral entry into host cell. Interacts with host SPSB2 (via C-terminus). Part of the viral assembly initiation complex composed of NS2, E1, E2, NS3, NS4A, NS5A and the mature core protein. Interacts with host NEURL3; this interaction prevents E1 binding to glycoprotein E2. As to quaternary structure, forms a heterodimer with envelope glycoprotein E1. Interacts with host CD81 and SCARB1 receptors; these interactions play a role in viral entry into host cell. Interacts with host EIF2AK2/PKR; this interaction inhibits EIF2AK2 and probably allows the virus to evade the innate immune response. Interacts with host CD209/DC-SIGN and CLEC4M/DC-SIGNR. Interact with host SPCS1; this interaction is essential for viral particle assembly. Interacts with protease NS2. The heterodimer E1/E2 interacts with host CLDN1; this interaction plays a role in viral entry into host cell. Part of the viral assembly initiation complex composed of NS2, E1, E2, NS3, NS4A, NS5A and the mature core protein. Interacts with host SLC3A2/4F2hc; the interaction may facilitate viral entry into host cell. Interacts with human PLSCR1. In terms of assembly, homohexamer. Homoheptamer. Interacts with protease NS2. Homodimer. Interacts with host SPCS1; this interaction is essential for viral particle assembly. Interacts with envelope glycoprotein E1. Interacts with envelope glycoprotein E2. Interacts with viroporin p7. Interacts with serine protease/helicase NS3. Part of the replication complex composed of NS2, NS3, NS4A, NS4B, NS5A and the RNA-directed RNA polymerase embedded in an ER-derived membranous web. Part of the viral assembly initiation complex composed of NS2, E1, E2, NS3, NS4A, NS5A and the mature core protein. As to quaternary structure, interacts with protease NS2. Interacts with non-structural protein 4A; this interaction stabilizes the folding of NS3 serine protease. NS3-NS4A interaction is essential for NS3 activation and allows membrane anchorage of the latter. NS3/NS4A complex also prevents phosphorylation of host IRF3, thus preventing the establishment of dsRNA induced antiviral state. Interacts with host MAVS; this interaction leads to the cleavage and inhibition of host MAVS. Interacts with host TICAM1; this interaction leads to the cleavage and inhibition of host TICAM1. Interacts with host TANK-binding kinase/TBK1; this interaction results in the inhibition of the association between TBK1 and IRF3, which leads to the inhibition of IRF3 activation. Interacts with host RBM24. Part of the replication complex composed of NS2, NS3, NS4A, NS4B, NS5A and the RNA-directed RNA polymerase embedded in an ER-derived membranous web. Part of the viral assembly initiation complex composed of NS2, E1, E2, NS3, NS4A, NS5A and the mature core protein. In terms of assembly, interacts with NS3 serine protease; this interaction stabilizes the folding of NS3 serine protease. NS3-NS4A interaction is essential for NS3 activation and allows membrane anchorage of the latter. Interacts with non-structural protein 5A (via N-terminus). Part of the replication complex composed of NS2, NS3, NS4A, NS4B, NS5A and the RNA-directed RNA polymerase embedded in an ER-derived membranous web. Part of the viral assembly initiation complex composed of NS2, E1, E2, NS3, NS4A, NS5A and the mature core protein. Homomultimer. Interacts with non-structural protein NS5A. Interacts with host PLA2G4C; this interaction likely initiates the recruitment of replication complexes to lipid droplets. Interacts with host STING; this interaction disrupts the interaction between STING and TBK1 thereby suppressing the interferon signaling. Part of the replication complex composed of NS2, NS3, NS4A, NS4B, NS5A and the RNA-directed RNA polymerase embedded in an ER-derived membranous web. As to quaternary structure, monomer. Homodimer; dimerization is required for RNA-binding. Interacts with mature core protein. Interacts (via N-terminus) with non-structural protein 4A. Interacts with non-structural protein 4B. Interacts with RNA-directed RNA polymerase. Part of the viral assembly initiation complex composed of NS2, E1, E2, NS3, NS4A, NS5A and the mature core protein. Part of the replication complex composed of NS2, NS3, NS4A, NS4B, NS5A and the RNA-directed RNA polymerase. Interacts with host GRB2. Interacts with host BIN1. Interacts with host PIK3R1. Interacts with host SRCAP. Interacts with host FKBP8. Interacts with host VAPB. Interacts with host EIF2AK2/PKR; this interaction leads to disruption of EIF2AK2 dimerization by NS5A and probably allows the virus to evade the innate immune response. Interacts (via N-terminus) with host PACSIN2 (via N-terminus); this interaction attenuates protein kinase C alpha-mediated phosphorylation of PACSIN2 by disrupting the interaction between PACSIN2 and PRKCA. Interacts (via N-terminus) with host SRC kinase (via SH2 domain). Interacts with most Src-family kinases. Interacts with host IFI27 and SKP2; promotes the ubiquitin-mediated proteasomal degradation of NS5A. Interacts with host GPS2. Interacts with host TNFRSF21; this interaction allows the modulation by the virus of JNK, p38 MAPK, STAT3, and Akt signaling pathways in a DR6-dependent manner. Interacts (via N-terminus) with host CIDEB (via N-terminus); this interaction seems to regulate the association of HCV particles with APOE. Interacts with host CHKA/Choline Kinase-alpha; CHKA bridges host PI4KA and NS5A and potentiates NS5A-stimulated PI4KA activity, which then facilitates the targeting of the ternary complex to the ER for viral replication. Interacts with host SPSB2 (via C-terminus); this interaction targets NS5A for ubiquitination and degradation. Interacts with host RAB18; this interaction may promote the association of NS5A and other replicase components with lipid droplets. Interacts with host TRIM14; this interaction induces the degradation of NS5A. In terms of assembly, homooligomer. Interacts with non-structural protein 5A. Interacts with host VAPB. Interacts with host PRK2/PKN2. Interacts with host HNRNPA1 and SEPT6; these interactions facilitate viral replication. Part of the replication complex composed of NS2, NS3, NS4A, NS4B, NS5A and the RNA-directed RNA polymerase. Initiates RNA transcription/replication at a flavin adenine dinucleotide (FAD), resulting in a 5'- FAD cap on viral RNAs. In this way, recognition of viral 5' RNA by host pattern recognition receptors can be bypassed, thereby evading activation of antiviral pathways. The cofactor is Zn(2+). It depends on Mg(2+) as a cofactor. Post-translationally, specific enzymatic cleavages in vivo yield mature proteins. The structural proteins, core, E1, E2 and p7 are produced by proteolytic processing by host signal peptidases. The core protein precursor is synthesized as a 23 kDa protein which is retained in the ER membrane through the hydrophobic signal peptide. Cleavage by the signal peptidase releases the 21 kDa mature core protein. The cleavage of the core protein precursor occurs between aminoacids 176 and 188 but the exact cleavage site is not known. Some degraded forms of the core protein appear as well during the course of infection. The other proteins (p7, NS2, NS3, NS4A, NS4B, NS5A and NS5B) are cleaved by the viral proteases. Autoprocessing between NS2 and NS3 is mediated by the NS2 cysteine protease catalytic domain and regulated by the NS3 N-terminal domain. Phosphorylated by host PKC and PKA. In terms of processing, ubiquitinated; mediated by UBE3A and leading to core protein subsequent proteasomal degradation. Post-translationally, highly N-glycosylated. Palmitoylation is required for NS2/3 autoprocessing and E2 recruitment to membranes. In terms of processing, palmitoylated. This modification may play a role in its polymerization or in protein-protein interactions. Post-translationally, cleaved by host caspases which are probably activated by the viral infection. Ubiquitinated. Ubiquitination, most probably at Lys-2350, mediated by host IFI27 and SKP2 leads to proteasomal degradation, restricting viral infection. In terms of processing, phosphorylated on serines in a basal form termed p56. p58 is a hyperphosphorylated form of p56. p56 and p58 coexist in the cell in roughly equivalent amounts. Hyperphosphorylation is dependent on the presence of NS4A. Host CSNK1A1/CKI-alpha or RPS6KB1 kinases may be responsible for NS5A phosphorylation. Phosphorylated NS5A is involved in viral replication. Post-translationally, tyrosine phosphorylation is essential for the interaction with host SRC. The N-terminus is phosphorylated by host PRK2/PKN2.

Its subcellular location is the host endoplasmic reticulum membrane. The protein localises to the host mitochondrion membrane. It is found in the virion. It localises to the host cytoplasm. The protein resides in the host nucleus. Its subcellular location is the host lipid droplet. The protein localises to the virion membrane. It is found in the host mitochondrion. It localises to the host cell membrane. The protein resides in the host perinuclear region. It catalyses the reaction Hydrolysis of four peptide bonds in the viral precursor polyprotein, commonly with Asp or Glu in the P6 position, Cys or Thr in P1 and Ser or Ala in P1'.. The catalysed reaction is a ribonucleoside 5'-triphosphate + H2O = a ribonucleoside 5'-diphosphate + phosphate + H(+). It carries out the reaction ATP + H2O = ADP + phosphate + H(+). The enzyme catalyses RNA(n) + a ribonucleoside 5'-triphosphate = RNA(n+1) + diphosphate. Its activity is regulated as follows. Inhibited by the antiviral drug hexamethylene amiloride. Inhibition by amantadine appears to be genotype-dependent. Also inhibited by long-alkyl-chain iminosugar derivatives. Activity is up-regulated by PRK2/PKN2-mediated phosphorylation. Its function is as follows. Packages viral RNA to form a viral nucleocapsid, and promotes virion budding. Participates in the viral particle production as a result of its interaction with the non-structural protein 5A. Binds RNA and may function as a RNA chaperone to induce the RNA structural rearrangements taking place during virus replication. Modulates viral translation initiation by interacting with viral IRES and 40S ribosomal subunit. Affects various cell signaling pathways, host immunity and lipid metabolism. Prevents the establishment of cellular antiviral state by blocking the interferon-alpha/beta (IFN-alpha/beta) and IFN-gamma signaling pathways and by blocking the formation of phosphorylated STAT1 and promoting ubiquitin-mediated proteasome-dependent degradation of STAT1. Activates STAT3 leading to cellular transformation. Regulates the activity of cellular genes, including c-myc and c-fos. May repress the promoter of p53, and sequester CREB3 and SP110 isoform 3/Sp110b in the cytoplasm. Represses cell cycle negative regulating factor CDKN1A, thereby interrupting an important check point of normal cell cycle regulation. Targets transcription factors involved in the regulation of inflammatory responses and in the immune response: suppresses TNF-induced NF-kappa-B activation, and activates AP-1. Binds to dendritic cells (DCs) via C1QR1, resulting in down-regulation of T-lymphocytes proliferation. Alters lipid metabolism by interacting with hepatocellular proteins involved in lipid accumulation and storage. Induces up-regulation of FAS promoter activity, and thereby contributes to the increased triglyceride accumulation in hepatocytes (steatosis). In terms of biological role, forms a heterodimer with envelope glycoprotein E2, which mediates virus attachment to the host cell, virion internalization through clathrin-dependent endocytosis and fusion with host membrane. Fusion with the host cell is most likely mediated by both E1 and E2, through conformational rearrangements of the heterodimer required for fusion rather than a classical class II fusion mechanism. E1/E2 heterodimer binds host apolipoproteins such as APOB and APOE thereby forming a lipo-viro-particle (LVP). APOE associated to the LVP allows the initial virus attachment to cell surface receptors such as the heparan sulfate proteoglycans (HSPGs), syndecan-1 (SDC1), syndecan-1 (SDC2), the low-density lipoprotein receptor (LDLR) and scavenger receptor class B type I (SCARB1). The cholesterol transfer activity of SCARB1 allows E2 exposure and binding of E2 to SCARB1 and the tetraspanin CD81. E1/E2 heterodimer binding on CD81 activates the epithelial growth factor receptor (EGFR) signaling pathway. Diffusion of the complex E1-E2-EGFR-SCARB1-CD81 to the cell lateral membrane allows further interaction with Claudin 1 (CLDN1) and occludin (OCLN) to finally trigger HCV entry. Functionally, forms a heterodimer with envelope glycoprotein E1, which mediates virus attachment to the host cell, virion internalization through clathrin-dependent endocytosis and fusion with host membrane. Fusion with the host cell is most likely mediated by both E1 and E2, through conformational rearrangements of the heterodimer required for fusion rather than a classical class II fusion mechanism. The interaction between envelope glycoprotein E2 and host apolipoprotein E/APOE allows the proper assembly, maturation and infectivity of the viral particles. This interaction is probably promoted via the up-regulation of cellular autophagy by the virus. E1/E2 heterodimer binds host apolipoproteins such as APOB and APOE thereby forming a lipo-viro-particle (LVP). APOE associated to the LVP allows the initial virus attachment to cell surface receptors such as the heparan sulfate proteoglycans (HSPGs), syndecan-1 (SDC1), syndecan-1 (SDC2), the low-density lipoprotein receptor (LDLR) and scavenger receptor class B type I (SCARB1). The cholesterol transfer activity of SCARB1 allows E2 exposure and binding of E2 to SCARB1 and the tetraspanin CD81. E1/E2 heterodimer binding on CD81 activates the epithelial growth factor receptor (EGFR) signaling pathway. Diffusion of the complex E1-E2-EGFR-SCARB1-CD81 to the cell lateral membrane allows further interaction with Claudin 1 (CLDN1) and occludin (OCLN) to finally trigger HCV entry. Inhibits host EIF2AK2/PKR activation, preventing the establishment of an antiviral state. Viral ligand for CD209/DC-SIGN and CLEC4M/DC-SIGNR, which are respectively found on dendritic cells (DCs), and on liver sinusoidal endothelial cells and macrophage-like cells of lymph node sinuses. These interactions allow the capture of circulating HCV particles by these cells and subsequent facilitated transmission to permissive cells such as hepatocytes and lymphocyte subpopulations. The interaction between E2 and host amino acid transporter complex formed by SLC3A2 and SLC7A5/LAT1 may facilitate viral entry into host cell. Ion channel protein that acts as a viroporin and plays an essential role in the assembly, envelopment and secretion of viral particles. Regulates the host cell secretory pathway, which induces the intracellular retention of viral glycoproteins and favors assembly of viral particles. Creates a pore in acidic organelles and releases Ca(2+) and H(+) in the cytoplasm of infected cells, leading to a productive viral infection. High levels of cytoplasmic Ca(2+) may trigger membrane trafficking and transport of viral ER-associated proteins to viroplasms, sites of viral genome replication. This ionic imbalance induces the assembly of the inflammasome complex, which triggers the maturation of pro-IL-1beta into IL-1beta through the action of caspase-1. Targets also host mitochondria and induces mitochondrial depolarization. In addition of its role as a viroporin, acts as a lipid raft adhesion factor. Its function is as follows. Cysteine protease required for the proteolytic auto-cleavage between the non-structural proteins NS2 and NS3. The N-terminus of NS3 is required for the function of NS2 protease (active region NS2-3). Promotes the initiation of viral particle assembly by mediating the interaction between structural and non-structural proteins. In terms of biological role, displays three enzymatic activities: serine protease with a chymotrypsin-like fold, NTPase and RNA helicase. NS3 serine protease, in association with NS4A, is responsible for the cleavages of NS3-NS4A, NS4A-NS4B, NS4B-NS5A and NS5A-NS5B. The NS3/NS4A complex prevents phosphorylation of host IRF3, thus preventing the establishment of dsRNA induced antiviral state. The NS3/NS4A complex induces host amino acid transporter component SLC3A2, thus contributing to HCV propagation. NS3 RNA helicase binds to RNA and unwinds both dsDNA and dsRNA in the 3' to 5' direction, and likely resolves RNA complicated stable secondary structures in the template strand. Binds a single ATP and catalyzes the unzipping of a single base pair of dsRNA. Inhibits host antiviral proteins TBK1 and IRF3 thereby preventing the establishment of an antiviral state. Cleaves host MAVS/CARDIF thereby preventing the establishment of an antiviral state. Cleaves host TICAM1/TRIF, thereby disrupting TLR3 signaling and preventing the establishment of an antiviral state. Functionally, the NS3/NS4A complex prevents phosphorylation of host IRF3, thus preventing the establishment of dsRNA induced antiviral state. The NS3/NS4A complex induces host amino acid transporter component SLC3A2, thus contributing to HCV propagation. Induces a specific membrane alteration that serves as a scaffold for the virus replication complex. This membrane alteration gives rise to the so-called ER-derived membranous web that contains the replication complex. NS4B self-interaction contributes to its function in membranous web formation. Promotes host TRIF protein degradation in a CASP8-dependent manner thereby inhibiting host TLR3-mediated interferon signaling. Disrupts the interaction between STING and TBK1 contributing to the inhibition of interferon signaling. Its function is as follows. Phosphorylated protein that is indispensable for viral replication and assembly. Both hypo- and hyperphosphorylated states are required for the viral life cycle. The hyperphosphorylated form of NS5A is an inhibitor of viral replication. Involved in RNA-binding and especially in binding to the viral genome. Zinc is essential for RNA-binding. Participates in the viral particle production as a result of its interaction with the mature viral core protein. Its interaction with host VAPB may target the viral replication complex to vesicles. Down-regulates viral IRES translation initiation. Mediates interferon resistance, presumably by interacting with and inhibiting host EIF2AK2/PKR. Prevents BIN1-induced apoptosis. Acts as a transcriptional activator of some host genes important for viral replication when localized in the nucleus. Via the interaction with host PACSIN2, modulates lipid droplet formation in order to promote virion assembly. Modulates TNFRSF21/DR6 signaling pathway for viral propagation. In terms of biological role, RNA-dependent RNA polymerase that performs primer-template recognition and RNA synthesis during viral replication. Initiates RNA transcription/replication at a flavin adenine dinucleotide (FAD), resulting in a 5'- FAD cap on viral RNAs. In this way, recognition of viral 5' RNA by host pattern recognition receptors can be bypassed, thereby evading activation of antiviral pathways. The sequence is that of Genome polyprotein from Homo sapiens (Human).